A 232-amino-acid chain; its full sequence is Sugar fermentation stimulation protein homolog (232 aa).

The protein belongs to the SfsA family.

This chain is Sugar fermentation stimulation protein homolog, found in Pyrobaculum arsenaticum (strain DSM 13514 / JCM 11321 / PZ6).